A 124-amino-acid chain; its full sequence is Protein MGF 110-4L (124 aa).

The signal sequence occupies residues 1–28 (MLVIFLGILGLLANQVLGLPTQAGGHLR). Asparagine 64 carries N-linked (GlcNAc...) asparagine; by host glycosylation. Positions 121–124 (KEDL) match the Prevents secretion from ER motif.

This sequence belongs to the asfivirus MGF 110 family.

The protein localises to the virion. Its subcellular location is the host endoplasmic reticulum-Golgi intermediate compartment. Causes the redistribution of lumenal ER protein to an enlarged ERGIC compartment. The chain is Protein MGF 110-4L from Ornithodoros (relapsing fever ticks).